We begin with the raw amino-acid sequence, 785 residues long: MAAAPPAAVSEPTAARQKLLALLGQVQTYVFQLELLRRCDPQIGLGKLAQLKLNALQVRVLRRHLRPGLEAQAAAFLTPLSVTLELLLEYAWREGERLLGHLETFATTGDVSAFFTETMGLARPCPYHQQIRLQTYGGDVRMELCFLHDVENFLKQLNYCHLITPPSGATAALERVREFMVAAVGSGLIVPPELSDPSHPCAVCFEELCVTANQGATIARRLADRICNHVTQQAQVRLDANELRRYLPHAAGLSDAARARALCVLDQALARTAAGGGARAGPPPADSSSVREEADALLEAHDVFQATTPGLYAISELRFWLASGDRARHSTMDAFADNLNALAQRELQQETAAVAVELALFGRRAEHFDRAFGGHLAALDMVDALIIGGQATSPDDQIEALIRACYDHHLTTPLLRRLVSPEQCDEEALRRVLARLGAGGATGGAEEEEPRAAAEEGGRRRGAGTPASEDGERGPEPGAQGPESWGDIATRAAADVRERRRLYADRLTKRSLASLGRCVREQRGELEKMLRVSVHGEVLPATFAAVANGFAARARFCALTAGAGTVIDNRAAPGVFDAHRFMRASLLRHQVDPALLPSITHRFFELVNGPLFDHSTHSFAQPPNTALYYSVENVGLLPHLKEELARFIMGAGGSGADWAVSEFQKFYCFDGVSGITPTQRAAWRYIRELIIATTLFASVYRCGELELRRPDCSRPTSEGLYRYPPGVYLTYNSDCPLVAIVESGPDGCIGPRSVVVYDRDVFSILYSVLQHLAPRLAGGGSDAPP.

The segment at 201-229 (CAVCFEELCVTANQGATIARRLADRICNH) adopts a C3H1-type zinc-finger fold. Positions 439–487 (GGATGGAEEEEPRAAAEEGGRRRGAGTPASEDGERGPEPGAQGPESWGD) are disordered. Residues 450-459 (PRAAAEEGGR) show a composition bias toward basic and acidic residues. Residue 696–703 (FASVYRCG) coordinates ATP.

Belongs to the herpesviridae TRM1 protein family. In terms of assembly, associates with TRM2 and TRM3 to form the tripartite terminase complex. Interacts with portal protein.

The protein localises to the host nucleus. Functionally, component of the molecular motor that translocates viral genomic DNA in empty capsid during DNA packaging. Forms a tripartite terminase complex together with TRM2 and TRM3 in the host cytoplasm. Once the complex reaches the host nucleus, it interacts with the capsid portal vertex. This portal forms a ring in which genomic DNA is translocated into the capsid. TRM1 carries an endonuclease activity that plays an important role for the cleavage of concatemeric viral DNA into unit length genomes. This chain is Tripartite terminase subunit 1, found in Human herpesvirus 2 (strain HG52) (HHV-2).